We begin with the raw amino-acid sequence, 199 residues long: Glycerol-3-phosphate acyltransferase (199 aa).

Helical transmembrane passes span 5 to 25 (VLTI…SAVL), 56 to 76 (SAAL…YLAF), 83 to 103 (IALG…IFFG), 118 to 138 (APIG…LVLV), and 141 to 161 (YSSF…WWLD).

Belongs to the PlsY family. Probably interacts with PlsX.

The protein resides in the cell inner membrane. It carries out the reaction an acyl phosphate + sn-glycerol 3-phosphate = a 1-acyl-sn-glycero-3-phosphate + phosphate. Its pathway is lipid metabolism; phospholipid metabolism. Its function is as follows. Catalyzes the transfer of an acyl group from acyl-phosphate (acyl-PO(4)) to glycerol-3-phosphate (G3P) to form lysophosphatidic acid (LPA). This enzyme utilizes acyl-phosphate as fatty acyl donor, but not acyl-CoA or acyl-ACP. The polypeptide is Glycerol-3-phosphate acyltransferase (Shewanella halifaxensis (strain HAW-EB4)).